We begin with the raw amino-acid sequence, 197 residues long: Endonuclease V (197 aa).

Mg(2+) is bound by residues Asp37 and Glu101.

The protein belongs to the endonuclease V family. The cofactor is Mg(2+).

Its subcellular location is the cytoplasm. The catalysed reaction is Endonucleolytic cleavage at apurinic or apyrimidinic sites to products with a 5'-phosphate.. In terms of biological role, DNA repair enzyme involved in the repair of deaminated bases. Selectively cleaves double-stranded DNA at the second phosphodiester bond 3' to a deoxyinosine leaving behind the intact lesion on the nicked DNA. The protein is Endonuclease V of Thermococcus kodakarensis (strain ATCC BAA-918 / JCM 12380 / KOD1) (Pyrococcus kodakaraensis (strain KOD1)).